The following is a 291-amino-acid chain: Lipoyl synthase, mitochondrial (291 aa).

Cys45, Cys50, Cys56, Cys71, Cys75, Cys78, and Ser283 together coordinate [4Fe-4S] cluster. A Radical SAM core domain is found at 57 to 272 (WGEGTATFMI…EKIGKELGFR (216 aa)).

Belongs to the radical SAM superfamily. Lipoyl synthase family. Requires [4Fe-4S] cluster as cofactor.

It localises to the mitochondrion. The catalysed reaction is [[Fe-S] cluster scaffold protein carrying a second [4Fe-4S](2+) cluster] + N(6)-octanoyl-L-lysyl-[protein] + 2 oxidized [2Fe-2S]-[ferredoxin] + 2 S-adenosyl-L-methionine + 4 H(+) = [[Fe-S] cluster scaffold protein] + N(6)-[(R)-dihydrolipoyl]-L-lysyl-[protein] + 4 Fe(3+) + 2 hydrogen sulfide + 2 5'-deoxyadenosine + 2 L-methionine + 2 reduced [2Fe-2S]-[ferredoxin]. Its pathway is protein modification; protein lipoylation via endogenous pathway; protein N(6)-(lipoyl)lysine from octanoyl-[acyl-carrier-protein]: step 2/2. Functionally, catalyzes the radical-mediated insertion of two sulfur atoms into the C-6 and C-8 positions of the octanoyl moiety bound to the lipoyl domains of lipoate-dependent enzymes, thereby converting the octanoylated domains into lipoylated derivatives. The protein is Lipoyl synthase, mitochondrial of Nematostella vectensis (Starlet sea anemone).